Reading from the N-terminus, the 611-residue chain is Acetylcholinesterase (611 aa).

Positions Met1 to Ala31 are cleaved as a signal peptide. A disulfide bond links Cys97 and Cys124. The Acyl-ester intermediate role is filled by Ser231. Cysteines 285 and 300 form a disulfide. The N-linked (GlcNAc...) asparagine glycan is linked to Asn293. Glu362 functions as the Charge relay system in the catalytic mechanism. Asn378 carries an N-linked (GlcNAc...) asparagine glycan. An intrachain disulfide couples Cys437 to Cys557. His475 functions as the Charge relay system in the catalytic mechanism. N-linked (GlcNAc...) asparagine glycosylation occurs at Asn492.

This sequence belongs to the type-B carboxylesterase/lipase family. Interacts with PRIMA1. The interaction with PRIMA1 is required to anchor it to the basal lamina of cells and organize into tetramers. Isoform H generates GPI-anchored dimers; disulfide linked. Isoform T generates multiple structures, ranging from monomers and dimers to collagen-tailed and hydrophobic-tailed forms, in which catalytic tetramers are associated with anchoring proteins that attach them to the basal lamina or to cell membranes. In the collagen-tailed forms, isoform T subunits are associated with a specific collagen, COLQ, which triggers the formation of isoform T tetramers, from monomers and dimers.

The protein resides in the synapse. It localises to the secreted. It is found in the cell membrane. It catalyses the reaction acetylcholine + H2O = choline + acetate + H(+). Terminates signal transduction at the neuromuscular junction by rapid hydrolysis of the acetylcholine released into the synaptic cleft. The protein is Acetylcholinesterase (ACHE) of Felis catus (Cat).